A 126-amino-acid polypeptide reads, in one-letter code: Transcription antitermination protein NusB (126 aa).

The protein belongs to the NusB family.

Its function is as follows. Involved in transcription antitermination. Required for transcription of ribosomal RNA (rRNA) genes. Binds specifically to the boxA antiterminator sequence of the ribosomal RNA (rrn) operons. The polypeptide is Transcription antitermination protein NusB (Oceanobacillus iheyensis (strain DSM 14371 / CIP 107618 / JCM 11309 / KCTC 3954 / HTE831)).